We begin with the raw amino-acid sequence, 147 residues long: Hemoglobin subunit gamma (147 aa).

Residues 3–147 (HFTVEEKAVI…VAIALAHKYH (145 aa)) form the Globin domain. The heme b site is built by His-64 and His-93.

It belongs to the globin family. In terms of assembly, heterotetramer of two alpha chains and two gamma chains in fetal hemoglobin (Hb F). In terms of tissue distribution, red blood cells.

Gamma chains make up the fetal hemoglobin F, in combination with alpha chains. This is Hemoglobin subunit gamma (HBG) from Cheirogaleus medius (Fat-tailed dwarf lemur).